The sequence spans 457 residues: Phosphoglucosamine mutase (457 aa).

Ser-103 (phosphoserine intermediate) is an active-site residue. Mg(2+)-binding residues include Ser-103, Asp-244, Asp-246, and Asp-248. Ser-103 is subject to Phosphoserine.

This sequence belongs to the phosphohexose mutase family. The cofactor is Mg(2+). Activated by phosphorylation.

It carries out the reaction alpha-D-glucosamine 1-phosphate = D-glucosamine 6-phosphate. Catalyzes the conversion of glucosamine-6-phosphate to glucosamine-1-phosphate. The polypeptide is Phosphoglucosamine mutase (Granulibacter bethesdensis (strain ATCC BAA-1260 / CGDNIH1)).